Consider the following 931-residue polypeptide: Beta-mannosidase A (931 aa).

Positions 1–21 (MRHSIGLAAALLAPTLPVALG) are cleaved as a signal peptide. Asparagine 40, asparagine 79, asparagine 247, asparagine 282, asparagine 316, asparagine 326, and asparagine 347 each carry an N-linked (GlcNAc...) asparagine glycan. Glutamate 479 serves as the catalytic Proton donor. N-linked (GlcNAc...) asparagine glycans are attached at residues asparagine 550, asparagine 608, asparagine 658, asparagine 738, asparagine 790, asparagine 798, asparagine 830, and asparagine 918.

It belongs to the glycosyl hydrolase 2 family. Beta-mannosidase A subfamily. As to quaternary structure, homodimer.

The protein localises to the secreted. The catalysed reaction is Hydrolysis of terminal, non-reducing beta-D-mannose residues in beta-D-mannosides.. It functions in the pathway glycan metabolism; N-glycan degradation. Its function is as follows. Exoglycosidase that cleaves the single beta-linked mannose residue from the non-reducing end of beta-mannosidic oligosaccharides of various complexity and length. Involved in the degradation of polymeric mannan and galactomannan. This chain is Beta-mannosidase A (mndA), found in Aspergillus niger (strain ATCC MYA-4892 / CBS 513.88 / FGSC A1513).